A 217-amino-acid chain; its full sequence is 3,4-dihydroxy-2-butanone 4-phosphate synthase (217 aa).

Residues 37 to 38 (RE), D42, 150 to 154 (RRGHT), and E174 each bind D-ribulose 5-phosphate. E38 contributes to the Mg(2+) binding site. A Mg(2+)-binding site is contributed by H153.

Belongs to the DHBP synthase family. In terms of assembly, homodimer. Mg(2+) is required as a cofactor. The cofactor is Mn(2+).

The catalysed reaction is D-ribulose 5-phosphate = (2S)-2-hydroxy-3-oxobutyl phosphate + formate + H(+). It participates in cofactor biosynthesis; riboflavin biosynthesis; 2-hydroxy-3-oxobutyl phosphate from D-ribulose 5-phosphate: step 1/1. In terms of biological role, catalyzes the conversion of D-ribulose 5-phosphate to formate and 3,4-dihydroxy-2-butanone 4-phosphate. The protein is 3,4-dihydroxy-2-butanone 4-phosphate synthase of Shewanella sediminis (strain HAW-EB3).